The sequence spans 578 residues: A-type ATP synthase subunit A (578 aa).

Gly-228–Thr-235 contacts ATP.

The protein belongs to the ATPase alpha/beta chains family. Has multiple subunits with at least A(3), B(3), C, D, E, F, H, I and proteolipid K(x).

It is found in the cell membrane. The catalysed reaction is ATP + H2O + 4 H(+)(in) = ADP + phosphate + 5 H(+)(out). Its function is as follows. Component of the A-type ATP synthase that produces ATP from ADP in the presence of a proton gradient across the membrane. The A chain is the catalytic subunit. In Methanosarcina barkeri (strain Fusaro / DSM 804), this protein is A-type ATP synthase subunit A.